The chain runs to 22 residues: Oxygen-evolving enhancer protein 2 (22 aa).

It belongs to the PsbP family.

The protein localises to the plastid. It localises to the chloroplast thylakoid membrane. Its function is as follows. May be involved in the regulation of photosystem II. This is Oxygen-evolving enhancer protein 2 from Physcomitrium patens (Spreading-leaved earth moss).